An 80-amino-acid chain; its full sequence is RNA-binding protein Hfq (80 aa).

Residues 10-70 form the Sm domain; the sequence is DIFLNNARKE…ISTVSPAKPI (61 aa).

The protein belongs to the Hfq family. In terms of assembly, homohexamer.

RNA chaperone that binds small regulatory RNA (sRNAs) and mRNAs to facilitate mRNA translational regulation in response to envelope stress, environmental stress and changes in metabolite concentrations. Also binds with high specificity to tRNAs. The chain is RNA-binding protein Hfq from Clostridium perfringens (strain SM101 / Type A).